The following is a 754-amino-acid chain: Neprilysin-1 (754 aa).

A helical; Signal-anchor for type II membrane protein transmembrane segment spans residues 5-27 (FGPPIVFLISCYALILCGTVDAL). N-linked (GlcNAc...) asparagine glycosylation is found at Asn-38, Asn-81, Asn-132, Asn-217, Asn-273, Asn-303, and Asn-441. The 692-residue stretch at 63–754 (VGDSEGYQEA…MNPTKRCVVW (692 aa)) folds into the Peptidase M13 domain. Disulfide bonds link Cys-87-Cys-739, Cys-95-Cys-699, Cys-151-Cys-414, and Cys-624-Cys-751. His-587 contributes to the Zn(2+) binding site. Glu-588 is an active-site residue. A Zn(2+)-binding site is contributed by His-591. N-linked (GlcNAc...) asparagine glycosylation occurs at Asn-612. Glu-649 is a Zn(2+) binding site. Asp-653 functions as the Proton donor in the catalytic mechanism.

Belongs to the peptidase M13 family. Zn(2+) is required as a cofactor. Specifically expressed in pharyngeal cells and a single head neuron.

It localises to the membrane. Its function is as follows. Probable cell surface protease. Required to control the neuronal innervation of pharyngeal pumping. The polypeptide is Neprilysin-1 (nep-1) (Caenorhabditis elegans).